A 122-amino-acid polypeptide reads, in one-letter code: Large ribosomal subunit protein bL17 (122 aa).

Belongs to the bacterial ribosomal protein bL17 family. Part of the 50S ribosomal subunit. Contacts protein L32.

The sequence is that of Large ribosomal subunit protein bL17 from Neisseria gonorrhoeae (strain ATCC 700825 / FA 1090).